The primary structure comprises 486 residues: F-box protein At1g80960 (486 aa).

Residues 49–97 (VDWISKLPDDVLLIILSRLSTEEAIRTSVVSKRWEHVWNQMSHLVFDMR) enclose the F-box domain.

This chain is F-box protein At1g80960, found in Arabidopsis thaliana (Mouse-ear cress).